The primary structure comprises 562 residues: Nucleoprotein (562 aa).

Positions 53-238 (MRRERRDDND…ITQEESQINI (186 aa)) are binding site for the cap structure m7GTP. Mn(2+) is bound by residues D381 and E383. Zn(2+)-binding residues include E391, C498, H501, and C522. D526 lines the Mn(2+) pocket.

Belongs to the arenaviridae nucleocapsid protein family. As to quaternary structure, homomultimerizes to form the nucleocapsid. Binds to viral genomic RNA. Interacts with glycoprotein G2. Interacts with protein Z; this interaction probably directs the encapsidated genome to budding sites. Interacts with protein L; this interaction does not interfere with Z-L interaction. Interacts with host IKBKE (via Protein kinase domain); the interaction inhibits IKBKE kinase activity.

It localises to the virion. It is found in the host cytoplasm. Its function is as follows. Encapsidates the genome, protecting it from nucleases. The encapsidated genomic RNA is termed the nucleocapsid (NC). Serves as template for viral transcription and replication. The increased presence of protein N in host cell does not seem to trigger the switch from transcription to replication as observed in other negative strain RNA viruses. Through the interaction with host IKBKE, strongly inhibits the phosphorylation and nuclear translocation of host IRF3, a protein involved in interferon activation pathway, leading to the inhibition of interferon-beta and IRF3-dependent promoters activation. Also encodes a functional 3'-5' exoribonuclease that degrades preferentially dsRNA substrates and thereby participates in the suppression of interferon induction. This Tamiami mammarenavirus (isolate Rat/United States/W 10777/1964) (TAMV) protein is Nucleoprotein.